Reading from the N-terminus, the 183-residue chain is TATA-box-binding protein 2 (183 aa).

Tandem repeats lie at residues 8-84 and 99-177.

It belongs to the TBP family.

General factor that plays a role in the activation of archaeal genes transcribed by RNA polymerase. Binds specifically to the TATA box promoter element which lies close to the position of transcription initiation. This chain is TATA-box-binding protein 2, found in Methanosarcina mazei (strain ATCC BAA-159 / DSM 3647 / Goe1 / Go1 / JCM 11833 / OCM 88) (Methanosarcina frisia).